Reading from the N-terminus, the 296-residue chain is MKAIYDLPAPAKLNLFLHITGRREDGYHLLQSVFMLIDWCDTLHVELRSDGQLSREDLTTELPPDDLVLRAARALQAHAAPGQGAHIGIAKQVPAQAGMGGGSSDAATCLLALNRLWGLDLPLSRLAEIGVQLGADVPFFLGGRNAWVEGIGEKIRPVDIPSARFVVAKPPQGLDTKLIFSAPDLQRATPVAIISGFAADSEQLEAPNPESSAFKVFDFGHNDLQPVAQRLCPAVTDAIEWLGAQGLKARMTGSGSSVFAKMPQGPQEAELAKAPPGWQVRQCSNLAVHPLWGWAT.

Lys-12 is a catalytic residue. Pro-94 to Ser-104 contacts ATP. Asp-136 is an active-site residue.

Belongs to the GHMP kinase family. IspE subfamily.

The catalysed reaction is 4-CDP-2-C-methyl-D-erythritol + ATP = 4-CDP-2-C-methyl-D-erythritol 2-phosphate + ADP + H(+). It participates in isoprenoid biosynthesis; isopentenyl diphosphate biosynthesis via DXP pathway; isopentenyl diphosphate from 1-deoxy-D-xylulose 5-phosphate: step 3/6. Its function is as follows. Catalyzes the phosphorylation of the position 2 hydroxy group of 4-diphosphocytidyl-2C-methyl-D-erythritol. This chain is 4-diphosphocytidyl-2-C-methyl-D-erythritol kinase, found in Variovorax paradoxus (strain S110).